The chain runs to 504 residues: Glucose-6-phosphate isomerase (504 aa).

Glu333 (proton donor) is an active-site residue. Residues His364 and Lys473 contribute to the active site.

The protein belongs to the GPI family.

It is found in the cytoplasm. The catalysed reaction is alpha-D-glucose 6-phosphate = beta-D-fructose 6-phosphate. It functions in the pathway carbohydrate biosynthesis; gluconeogenesis. The protein operates within carbohydrate degradation; glycolysis; D-glyceraldehyde 3-phosphate and glycerone phosphate from D-glucose: step 2/4. Functionally, catalyzes the reversible isomerization of glucose-6-phosphate to fructose-6-phosphate. This chain is Glucose-6-phosphate isomerase, found in Stenotrophomonas maltophilia (strain R551-3).